The primary structure comprises 241 residues: Pyridoxine 5'-phosphate synthase (241 aa).

Asn7 is a 3-amino-2-oxopropyl phosphate binding site. 9–10 (DH) is a binding site for 1-deoxy-D-xylulose 5-phosphate. 3-amino-2-oxopropyl phosphate is bound at residue Arg18. His43 (proton acceptor) is an active-site residue. 1-deoxy-D-xylulose 5-phosphate contacts are provided by Arg45 and His50. Glu70 serves as the catalytic Proton acceptor. Thr100 provides a ligand contact to 1-deoxy-D-xylulose 5-phosphate. His191 (proton donor) is an active-site residue. 3-amino-2-oxopropyl phosphate-binding positions include Gly192 and 213-214 (GH).

The protein belongs to the PNP synthase family. Homooctamer; tetramer of dimers.

It is found in the cytoplasm. The catalysed reaction is 3-amino-2-oxopropyl phosphate + 1-deoxy-D-xylulose 5-phosphate = pyridoxine 5'-phosphate + phosphate + 2 H2O + H(+). It participates in cofactor biosynthesis; pyridoxine 5'-phosphate biosynthesis; pyridoxine 5'-phosphate from D-erythrose 4-phosphate: step 5/5. Catalyzes the complicated ring closure reaction between the two acyclic compounds 1-deoxy-D-xylulose-5-phosphate (DXP) and 3-amino-2-oxopropyl phosphate (1-amino-acetone-3-phosphate or AAP) to form pyridoxine 5'-phosphate (PNP) and inorganic phosphate. This is Pyridoxine 5'-phosphate synthase from Maridesulfovibrio salexigens (strain ATCC 14822 / DSM 2638 / NCIMB 8403 / VKM B-1763) (Desulfovibrio salexigens).